The chain runs to 381 residues: Peptidoglycan transport system permease protein YejE (381 aa).

Helical transmembrane passes span 38–58 (YWSFWLFLILFFLSLIAEFIA), 183–203 (VLFGLTLTIASALVGVTAGAI), 230–250 (ILLIIAAILPPGFFVLLGIML), 292–312 (LLPNAMVATLTFLPFILSGSI), and 347–367 (WLGLTAFFTMSIMLSLLIFVG). Positions 179–371 (FRISVLFGLT…LLIFVGEAVR (193 aa)) constitute an ABC transmembrane type-1 domain.

The protein belongs to the binding-protein-dependent transport system permease family. As to quaternary structure, the complex is composed of one ATP-binding protein (YejF), two transmembrane proteins (YejB and YejE) and a solute-binding protein (YepA or YejA).

The protein resides in the cell inner membrane. Its function is as follows. Part of the ABC transporter complex YejBEF-YepA involved in the uptake of muropeptides, the breakdown products of cell wall peptidoglycan. The import of muropeptides into the cell enables peptidoglycan recycling, which is vital for cell wall integrity in this bacterium. Is also probably part of the ABC transporter complex YejABEF, which is likely involved in broad-spectrum peptide import. Responsible for the translocation of the substrate across the membrane. The chain is Peptidoglycan transport system permease protein YejE from Agrobacterium fabrum (strain C58 / ATCC 33970) (Agrobacterium tumefaciens (strain C58)).